A 37-amino-acid polypeptide reads, in one-letter code: Omega-conotoxin-like S6.7 (37 aa).

A propeptide spanning residues 1 to 4 is cleaved from the precursor; the sequence is KSTS. Cystine bridges form between cysteine 5/cysteine 20, cysteine 12/cysteine 23, and cysteine 19/cysteine 32.

It belongs to the conotoxin O1 superfamily. As to expression, expressed by the venom duct.

Its subcellular location is the secreted. Omega-conotoxins act at presynaptic membranes, they bind and block voltage-gated calcium channels (Cav). This toxin blocks N-, P- and Q-type calcium channels. This is Omega-conotoxin-like S6.7 from Conus striatus (Striated cone).